Consider the following 632-residue polypeptide: MHCMAVHQFSPSIVSSLPTISTYNNNHFCRFFTPKTSISPISKTKSKSSTCYPIQCTVVNNSSPSSTIVRRSANYEPPIWSFDYIQSLSTQYKGESYTRQLNKLKKEVKRMLLRMEINSLALLELIDTLQRLGISYHFKNEINTILKKKYNDNYINNNIITNPNYNNLYATALEFRLLRQHGYTVPQEIFNAFKDKRGKFKTSLSDDIMGVLCLYEASFYAMKHENILEEARIFSTKCLKKYMEKIENEEEKKILLLNDNNINSNLLLINHAFELPLHWRITRSEARWFIDEIYEKKQDMNSTLFEFAKLDFNIVQSTHQEDLQHLSRWWRDCKLGGKLNFARDRLMEAFLWDVGLKFEGEFSYFRRTNARLFVLITIIDDIYDVYGTLEELELFTSAVERWDVKLINELPDYMKMPFFVLHNTINEMGFDVLVEQNFVNIEYLKKSWVDLCKCYLQEAKWYYSGYQPTLEEYTELGWLSIGASVILMHAYFCFTNPITKQDLKSLQLQHHYPNIIKQACLITRLADDLGTSSDELNRGDVPKSIQCYMYDNNATEDEAREHIKFLISETWKDMNKKDEDESCLSENFVEVCKNMARTALFIYENGDGHGSQNSLSKERISTLIITPINIPK.

The transit peptide at 1–55 (MHCMAVHQFSPSIVSSLPTISTYNNNHFCRFFTPKTSISPISKTKSKSSTCYPIQ) directs the protein to the chloroplast. 5 residues coordinate (2E)-geranyl diphosphate: Arg-343, Asp-380, Asp-384, Arg-524, and Asp-527. Residues Asp-380 and Asp-384 each contribute to the Mg(2+) site. Residues 380–384 (DDIYD) carry the DDXXD motif motif. Residues Asp-527, Thr-531, and Glu-535 each contribute to the Mg(2+) site.

Belongs to the terpene synthase family. Tpsb subfamily. The cofactor is Mg(2+). Mn(2+) is required as a cofactor. In terms of tissue distribution, expressed in glandular trichomes two to four weeks after flowering onset.

The protein resides in the plastid. It localises to the chloroplast. It carries out the reaction (2E)-geranyl diphosphate = beta-myrcene + diphosphate. The protein operates within secondary metabolite biosynthesis; terpenoid biosynthesis. Its function is as follows. Involved in monoterpene (C10) olefins biosynthesis, constituants of cannabinoids and terpenoids-rich resins. Catalyzes strictly the conversion of (2E)-geranyl diphosphate to beta-myrcene. The protein is Myrcene synthase TPS3FN, chloroplastic of Cannabis sativa (Hemp).